The sequence spans 1050 residues: Diacylglycerol kinase iota (1050 aa).

Disordered stretches follow at residues 53-74 (PSSS…GSGA), 92-111 (AAAA…EKEE), and 328-356 (SLKA…ETKG). Residues 92–105 (AAAAAALEEPAAAG) show a composition bias toward low complexity. Over residues 332-347 (SNRKKKRTSFKRKASK) the composition is skewed to basic residues. Residues 367–502 (PLMKPLLVFV…DRWNLHVERN (136 aa)) enclose the DAGKc domain. ANK repeat units follow at residues 943–972 (GHCS…AELL) and 979–1008 (TGET…SLRQ). The PDZ-binding signature appears at 1048–1050 (TAV).

Belongs to the eukaryotic diacylglycerol kinase family. Interacts (via PDZ-binding motif) with DLG4; controls the localization of DGKI to the synapse. Interacts (via PDZ-binding motif) with DLG1. Interacts (via PDZ-binding motif) with DLG2. Interacts (via PDZ-binding motif) with DLG3. May interact with RASGRP3; involved in the regulation of RASGRP3 activity. In brain, expressed in the hippocampus and cerebellum with stronger expression in the Purkinje cell layer (at protein level). Expressed in kidney.

It localises to the cell projection. Its subcellular location is the axon. The protein localises to the dendrite. It is found in the presynapse. The protein resides in the postsynapse. It localises to the postsynaptic density. Its subcellular location is the synaptic cell membrane. The protein localises to the cytoplasmic vesicle. It is found in the secretory vesicle. The protein resides in the synaptic vesicle membrane. It localises to the cytoplasm. Its subcellular location is the cytosol. The protein localises to the nucleus. The catalysed reaction is a 1,2-diacyl-sn-glycerol + ATP = a 1,2-diacyl-sn-glycero-3-phosphate + ADP + H(+). It carries out the reaction 1,2-di-(9Z-octadecenoyl)-sn-glycerol + ATP = 1,2-di-(9Z-octadecenoyl)-sn-glycero-3-phosphate + ADP + H(+). The enzyme catalyses 1-octadecanoyl-2-(5Z,8Z,11Z,14Z-eicosatetraenoyl)-sn-glycerol + ATP = 1-octadecanoyl-2-(5Z,8Z,11Z,14Z-eicosatetraenoyl)-sn-glycero-3-phosphate + ADP + H(+). It catalyses the reaction 1-octadecanoyl-2-(9Z,12Z)-octadecadienoyl-sn-glycerol + ATP = 1-octadecanoyl-2-(9Z,12Z-octadecadienoyl)-sn-glycero-3-phosphate + ADP + H(+). The protein operates within lipid metabolism; glycerolipid metabolism. In terms of biological role, diacylglycerol kinase that converts diacylglycerol/DAG into phosphatidic acid/phosphatidate/PA and regulates the respective levels of these two bioactive lipids. Thereby, acts as a central switch between the signaling pathways activated by these second messengers with different cellular targets and opposite effects in numerous biological processes. Has probably no preference for any of the diacylglycerols in terms of the acyl chain composition, especially for the acyl chain at the sn-2 position. By controlling the diacylglycerol/DAG-mediated activation of RASGRP3, negatively regulates the Rap1 signaling pathway. May play a role in presynaptic diacylglycerol/DAG signaling and control neurotransmitter release during metabotropic glutamate receptor-dependent long-term depression. The chain is Diacylglycerol kinase iota from Mus musculus (Mouse).